We begin with the raw amino-acid sequence, 223 residues long: Neurotrophic factor BDNF precursor form (223 aa).

The first 5 residues, 1–5 (SCMKA), serve as a signal peptide directing secretion. The propeptide occupies 6 to 114 (APMKEVSIRG…AANMSMRVRR (109 aa)). The N-linked (GlcNAc...) asparagine glycan is linked to Asn107. 2 disulfide bridges follow: Cys127/Cys194 and Cys172/Cys223.

The protein belongs to the NGF-beta family.

Its subcellular location is the secreted. In terms of biological role, promotes the survival of neuronal populations that are all located either in the central nervous system or directly connected to it. The sequence is that of Neurotrophic factor BDNF precursor form (BDNF) from Eryx johnii (Indian red sand boa).